The chain runs to 410 residues: Cytochrome P450 CYP107DY1 (410 aa).

Heme-binding residues include His-106 and Arg-110. 2 residues coordinate substrate: Thr-249 and Glu-253. Residues Arg-302, His-358, and Cys-360 each coordinate heme.

Belongs to the cytochrome P450 family. Heme is required as a cofactor.

It carries out the reaction mevastatin + 2 reduced [2Fe-2S]-[ferredoxin] + O2 + 2 H(+) = pravastatin lactone + 2 oxidized [2Fe-2S]-[ferredoxin] + H2O. In terms of biological role, cytochrome P450 whose physiological substrate is unknown. In vitro, is able to catalyze the selective hydroxylation of mevastatin to pravastatin, the widely used therapeutic agent for hypercholesterolemia. The protein is Cytochrome P450 CYP107DY1 of Priestia megaterium (strain ATCC 12872 / QMB1551) (Bacillus megaterium).